Consider the following 707-residue polypeptide: Anti-sigma-I factor RsgI9 (707 aa).

Over 1-149 the chain is Cytoplasmic; that stretch reads MKITGVIVRI…NFSRISNIKN (149 aa). Residues 3–50 form the RsgI N-terminal anti-sigma domain; the sequence is ITGVIVRIHKDRAIIRTDDNRLLAVKRHNDMMVGQIVSFDANEVHKVE. Residues 150 to 172 form a helical membrane-spanning segment; it reads FSRIASIAAAFVLIFLFGRNVML. Residues 173-707 are Extracellular-facing; sequence NNSSDSEYAY…DSEEKKEYIQ (535 aa). Residues 256–283 adopt a coiled-coil conformation; it reads NDKNKKTRDKREEKIDELKETIEQGIEA. The segment at 345–392 is disordered; it reads EDNTELAPTPTPVPPETPEPTPTPTASEATPSNSPVESKSPEAVPELG. Positions 353–367 are enriched in pro residues; it reads TPTPVPPETPEPTPT. A compositionally biased stretch (low complexity) spans 368 to 379; the sequence is PTASEATPSNSP.

It is found in the cell membrane. This is Anti-sigma-I factor RsgI9 from Acetivibrio thermocellus (strain ATCC 27405 / DSM 1237 / JCM 9322 / NBRC 103400 / NCIMB 10682 / NRRL B-4536 / VPI 7372) (Clostridium thermocellum).